The chain runs to 389 residues: Lipid-A-disaccharide synthase (389 aa).

This sequence belongs to the LpxB family.

The catalysed reaction is a lipid X + a UDP-2-N,3-O-bis[(3R)-3-hydroxyacyl]-alpha-D-glucosamine = a lipid A disaccharide + UDP + H(+). Its pathway is bacterial outer membrane biogenesis; LPS lipid A biosynthesis. In terms of biological role, condensation of UDP-2,3-diacylglucosamine and 2,3-diacylglucosamine-1-phosphate to form lipid A disaccharide, a precursor of lipid A, a phosphorylated glycolipid that anchors the lipopolysaccharide to the outer membrane of the cell. The sequence is that of Lipid-A-disaccharide synthase from Histophilus somni (strain 2336) (Haemophilus somnus).